A 328-amino-acid polypeptide reads, in one-letter code: Tetraacyldisaccharide 4'-kinase (328 aa).

55 to 62 (TAGGNGKT) lines the ATP pocket.

The protein belongs to the LpxK family.

It catalyses the reaction a lipid A disaccharide + ATP = a lipid IVA + ADP + H(+). The protein operates within glycolipid biosynthesis; lipid IV(A) biosynthesis; lipid IV(A) from (3R)-3-hydroxytetradecanoyl-[acyl-carrier-protein] and UDP-N-acetyl-alpha-D-glucosamine: step 6/6. Its function is as follows. Transfers the gamma-phosphate of ATP to the 4'-position of a tetraacyldisaccharide 1-phosphate intermediate (termed DS-1-P) to form tetraacyldisaccharide 1,4'-bis-phosphate (lipid IVA). The chain is Tetraacyldisaccharide 4'-kinase from Escherichia coli O157:H7.